The primary structure comprises 627 residues: DNA mismatch repair protein MutL (627 aa).

This sequence belongs to the DNA mismatch repair MutL/HexB family.

In terms of biological role, this protein is involved in the repair of mismatches in DNA. It is required for dam-dependent methyl-directed DNA mismatch repair. May act as a 'molecular matchmaker', a protein that promotes the formation of a stable complex between two or more DNA-binding proteins in an ATP-dependent manner without itself being part of a final effector complex. The polypeptide is DNA mismatch repair protein MutL (Mesorhizobium japonicum (strain LMG 29417 / CECT 9101 / MAFF 303099) (Mesorhizobium loti (strain MAFF 303099))).